The chain runs to 507 residues: Serine/threonine-protein kinase BSK11 (507 aa).

Gly2 carries the N-myristoyl glycine lipid modification. Over residues 16–26 (DKKITSDDLSG) the composition is skewed to basic and acidic residues. The disordered stretch occupies residues 16 to 44 (DKKITSDDLSGRRGKGAKRGNRHRHANIN). Basic residues predominate over residues 27-41 (RRGKGAKRGNRHRHA). The Protein kinase domain maps to 75 to 332 (NAVVSVCSDQ…GDIISVITTL (258 aa)). ATP contacts are provided by residues 81 to 89 (CSDQEPNLV) and Lys106. The Proton acceptor role is filled by Asp200.

It belongs to the protein kinase superfamily. Ser/Thr protein kinase family. Interacts with BRI1, ASK7/BIN2, BSK1, BSK6 and BSK8. In terms of processing, phosphorylated by BRI1, ASK7/BIN2 and ASK9/BIL2.

The protein resides in the cell membrane. It catalyses the reaction L-seryl-[protein] + ATP = O-phospho-L-seryl-[protein] + ADP + H(+). The catalysed reaction is L-threonyl-[protein] + ATP = O-phospho-L-threonyl-[protein] + ADP + H(+). Its function is as follows. Probable serine/threonine kinase that acts as a positive regulator of brassinosteroid (BR) signaling downstream of the receptor kinase BRI1. This Arabidopsis thaliana (Mouse-ear cress) protein is Serine/threonine-protein kinase BSK11.